The primary structure comprises 250 residues: DNA polymerase sliding clamp (250 aa).

Belongs to the PCNA family. In terms of assembly, homotrimer. The subunits circularize to form a toroid; DNA passes through its center. Replication factor C (RFC) is required to load the toroid on the DNA.

Functionally, sliding clamp subunit that acts as a moving platform for DNA processing. Responsible for tethering the catalytic subunit of DNA polymerase and other proteins to DNA during high-speed replication. This is DNA polymerase sliding clamp from Methanococcus maripaludis (strain DSM 14266 / JCM 13030 / NBRC 101832 / S2 / LL).